The following is a 189-amino-acid chain: GTP cyclohydrolase 1 (189 aa).

Zn(2+) contacts are provided by cysteine 78, histidine 81, and cysteine 150.

The protein belongs to the GTP cyclohydrolase I family. As to quaternary structure, toroid-shaped homodecamer, composed of two pentamers of five dimers.

The enzyme catalyses GTP + H2O = 7,8-dihydroneopterin 3'-triphosphate + formate + H(+). The protein operates within cofactor biosynthesis; 7,8-dihydroneopterin triphosphate biosynthesis; 7,8-dihydroneopterin triphosphate from GTP: step 1/1. This is GTP cyclohydrolase 1 from Listeria monocytogenes serovar 1/2a (strain ATCC BAA-679 / EGD-e).